The following is a 370-amino-acid chain: Cysteine-type anaerobic sulfatase-maturating enzyme (370 aa).

The Radical SAM core domain maps to 1–227 (MPPLSLLIKP…LKNLFDFWYE (227 aa)). [4Fe-4S] cluster is bound by residues Cys-15 and Cys-19. Tyr-21 contributes to the S-adenosyl-L-methionine binding site. Cys-22 lines the [4Fe-4S] cluster pocket. Residues Gly-66, Ser-122, Arg-134, and Leu-195 each contribute to the S-adenosyl-L-methionine site. 3 residues coordinate [4Fe-4S] cluster: Cys-255, Cys-261, and Cys-276. Asp-277 (proton acceptor) is an active-site residue. Positions 317, 320, 326, 330, and 348 each coordinate [4Fe-4S] cluster.

The protein belongs to the radical SAM superfamily. Anaerobic sulfatase-maturating enzyme family. As to quaternary structure, monomer. The cofactor is [4Fe-4S] cluster.

It catalyses the reaction L-cysteinyl-[sulfatase] + S-adenosyl-L-methionine + H2O = 3-oxo-L-alanyl-[sulfatase] + hydrogen sulfide + 5'-deoxyadenosine + L-methionine + 2 H(+). It functions in the pathway protein modification; sulfatase oxidation. Its function is as follows. Involved in 'Cys-type' sulfatase maturation under anaerobic conditions. Catalyzes the post-translational modification of cysteine ('Cys-51' in the arylsulfatase CPF_0221) into 3-oxoalanine (also known as C(alpha)-formylglycine (FGly)), by a free radical chemical mechanism initiated via the reductive cleavage of S-adenosyl-L-methionine (SAM). Is also able to oxidize a serine residue in a synthetic substrate to FGly in vitro, and in a serine variant of a Cys-type sulfatase in vivo, but this activity is not physiological. Converts threonyl peptides to the corresponding ketone product, and also allo-threonyl peptides, but with a significantly reduced efficiency. In Clostridium perfringens (strain ATCC 13124 / DSM 756 / JCM 1290 / NCIMB 6125 / NCTC 8237 / Type A), this protein is Cysteine-type anaerobic sulfatase-maturating enzyme.